Consider the following 120-residue polypeptide: uncharacterized protein (120 aa).

Residues 19–41 (YPELFITWCVMTYTFGVAGYMLG) form a helical membrane-spanning segment. A disordered region spans residues 57 to 78 (SKNAHPWEDTKSSSGKSDESLD). Over residues 61–75 (HPWEDTKSSSGKSDE) the composition is skewed to basic and acidic residues.

The protein resides in the membrane. This is an uncharacterized protein from Schizosaccharomyces pombe (strain 972 / ATCC 24843) (Fission yeast).